Here is a 92-residue protein sequence, read N- to C-terminus: Small ribosomal subunit protein uS19 (92 aa).

It belongs to the universal ribosomal protein uS19 family.

Protein S19 forms a complex with S13 that binds strongly to the 16S ribosomal RNA. The sequence is that of Small ribosomal subunit protein uS19 from Bartonella bacilliformis (strain ATCC 35685 / KC583 / Herrer 020/F12,63).